The primary structure comprises 208 residues: MADMKRLKHLMFSPFIDNNPIALQVLGICSALAVTTKLQTAIVMGISVALVTGFSSFFISLVRNYIPNSIRIIVQMAIIASLVTLVDQLLQAFAYELSKQLSVFVGLIITNCIVMGRAEAFAMKEPPLESLIDGIGNGAGYGMMLLVVATVRELIGSGKLLGYTVFQTVQDGGWYQTNGLFLLAPSAFFIIGFLIWGLRTWKPEQAEE.

The next 5 helical transmembrane spans lie at 42–62 (IVMG…ISLV), 72–92 (IIVQ…LLQA), 103–123 (VFVG…AFAM), 131–151 (LIDG…VATV), and 178–198 (NGLF…IWGL).

The protein belongs to the NqrDE/RnfAE family. Composed of six subunits; NqrA, NqrB, NqrC, NqrD, NqrE and NqrF.

It localises to the cell inner membrane. The catalysed reaction is a ubiquinone + n Na(+)(in) + NADH + H(+) = a ubiquinol + n Na(+)(out) + NAD(+). NQR complex catalyzes the reduction of ubiquinone-1 to ubiquinol by two successive reactions, coupled with the transport of Na(+) ions from the cytoplasm to the periplasm. NqrA to NqrE are probably involved in the second step, the conversion of ubisemiquinone to ubiquinol. This Neisseria gonorrhoeae (strain ATCC 700825 / FA 1090) protein is Na(+)-translocating NADH-quinone reductase subunit D.